Here is an 85-residue protein sequence, read N- to C-terminus: Cell division topological specificity factor (85 aa).

The protein belongs to the MinE family.

Prevents the cell division inhibition by proteins MinC and MinD at internal division sites while permitting inhibition at polar sites. This ensures cell division at the proper site by restricting the formation of a division septum at the midpoint of the long axis of the cell. In Shewanella sp. (strain ANA-3), this protein is Cell division topological specificity factor.